The following is a 357-amino-acid chain: Histidinol-phosphate aminotransferase (357 aa).

Lysine 212 bears the N6-(pyridoxal phosphate)lysine mark.

Belongs to the class-II pyridoxal-phosphate-dependent aminotransferase family. Histidinol-phosphate aminotransferase subfamily. Homodimer. It depends on pyridoxal 5'-phosphate as a cofactor.

It catalyses the reaction L-histidinol phosphate + 2-oxoglutarate = 3-(imidazol-4-yl)-2-oxopropyl phosphate + L-glutamate. It functions in the pathway amino-acid biosynthesis; L-histidine biosynthesis; L-histidine from 5-phospho-alpha-D-ribose 1-diphosphate: step 7/9. The protein is Histidinol-phosphate aminotransferase of Pectobacterium carotovorum subsp. carotovorum (strain PC1).